The sequence spans 275 residues: Echotoxin-2 (275 aa).

Residues 1-23 (MKRNILALVVVVALISQSRPAES) form the signal peptide. A plays an important role in the hemolytic activity region spans residues 23 to 32 (SAGGTIIATL). The N-terminal region stretch occupies residues 49–67 (ETGASVASAAAAATSSDYS). Residues glycine 123, serine 141, proline 143, tyrosine 176, and tyrosine 177 each coordinate phosphocholine. The tract at residues 141–156 (SAPYNFDFYSNWLAVG) is trp-rich region, which is important for the binding to lipid membrane. Residues 249-275 (RAIQQELARRAEEEKQRKRKALDEMLK) constitute a propeptide that is removed on maturation.

It belongs to the actinoporin family. Sea anemone subfamily. As to quaternary structure, octamer or nonamer in membranes. Monomer in the soluble state. In terms of tissue distribution, salivary gland.

Its subcellular location is the secreted. The protein localises to the nematocyst. It localises to the target cell membrane. In terms of biological role, pore-forming protein that forms cations-selective hydrophilic pores of around 1 nm and causes cardiac stimulation and cytolysis. Pore formation is a multi-step process that involves specific recognition of membrane sphingomyelin (but neither cholesterol nor phosphatidylcholine) using aromatic rich region and adjacent phosphocholine (POC) binding site, firm binding to the membrane (mainly driven by hydrophobic interactions) accompanied by the transfer of the N-terminal region to the lipid-water interface and finally pore formation after oligomerization of monomers. Exhibits both hemolytic and lethal activities. Gangliosides potently inhibits the hemolytic activity. This is Echotoxin-2 from Monoplex parthenopeus (Giant triton).